A 213-amino-acid polypeptide reads, in one-letter code: 3-isopropylmalate dehydratase small subunit (213 aa).

It belongs to the LeuD family. LeuD type 1 subfamily. In terms of assembly, heterodimer of LeuC and LeuD.

The catalysed reaction is (2R,3S)-3-isopropylmalate = (2S)-2-isopropylmalate. It functions in the pathway amino-acid biosynthesis; L-leucine biosynthesis; L-leucine from 3-methyl-2-oxobutanoate: step 2/4. Its function is as follows. Catalyzes the isomerization between 2-isopropylmalate and 3-isopropylmalate, via the formation of 2-isopropylmaleate. This Neisseria meningitidis serogroup A / serotype 4A (strain DSM 15465 / Z2491) protein is 3-isopropylmalate dehydratase small subunit.